We begin with the raw amino-acid sequence, 71 residues long: Conotoxin Tx11.3 (71 aa).

The first 19 residues, 1 to 19 (MKLCVTFLLVLVILPSVTG), serve as a signal peptide directing secretion. The propeptide occupies 20–47 (VKSSERTLSGAALRGDRGTCSGRGQECK). 4 cysteine pairs are disulfide-bonded: Cys39-Cys53, Cys46-Cys58, Cys52-Cys63, and Cys57-Cys70.

It belongs to the I1 superfamily. As to expression, expressed by the venom duct.

The protein resides in the secreted. This is Conotoxin Tx11.3 from Conus textile (Cloth-of-gold cone).